A 180-amino-acid polypeptide reads, in one-letter code: Acireductone dioxygenase (180 aa).

His96, His98, Glu102, and His140 together coordinate Fe(2+). Ni(2+) contacts are provided by His96, His98, Glu102, and His140.

The protein belongs to the acireductone dioxygenase (ARD) family. As to quaternary structure, monomer. Fe(2+) is required as a cofactor. It depends on Ni(2+) as a cofactor.

It catalyses the reaction 1,2-dihydroxy-5-(methylsulfanyl)pent-1-en-3-one + O2 = 3-(methylsulfanyl)propanoate + CO + formate + 2 H(+). The catalysed reaction is 1,2-dihydroxy-5-(methylsulfanyl)pent-1-en-3-one + O2 = 4-methylsulfanyl-2-oxobutanoate + formate + 2 H(+). Its pathway is amino-acid biosynthesis; L-methionine biosynthesis via salvage pathway; L-methionine from S-methyl-5-thio-alpha-D-ribose 1-phosphate: step 5/6. Its function is as follows. Catalyzes 2 different reactions between oxygen and the acireductone 1,2-dihydroxy-3-keto-5-methylthiopentene (DHK-MTPene) depending upon the metal bound in the active site. Fe-containing acireductone dioxygenase (Fe-ARD) produces formate and 2-keto-4-methylthiobutyrate (KMTB), the alpha-ketoacid precursor of methionine in the methionine recycle pathway. Ni-containing acireductone dioxygenase (Ni-ARD) produces methylthiopropionate, carbon monoxide and formate, and does not lie on the methionine recycle pathway. In Synechococcus sp. (strain WH7803), this protein is Acireductone dioxygenase.